The primary structure comprises 170 residues: ATP synthase subunit b (170 aa).

A helical membrane pass occupies residues 30–50 (FFFVLAIFLVVLAVIGTFVVP).

The protein belongs to the ATPase B chain family. In terms of assembly, F-type ATPases have 2 components, F(1) - the catalytic core - and F(0) - the membrane proton channel. F(1) has five subunits: alpha(3), beta(3), gamma(1), delta(1), epsilon(1). F(0) has three main subunits: a(1), b(2) and c(10-14). The alpha and beta chains form an alternating ring which encloses part of the gamma chain. F(1) is attached to F(0) by a central stalk formed by the gamma and epsilon chains, while a peripheral stalk is formed by the delta and b chains.

The protein localises to the cell membrane. Functionally, f(1)F(0) ATP synthase produces ATP from ADP in the presence of a proton or sodium gradient. F-type ATPases consist of two structural domains, F(1) containing the extramembraneous catalytic core and F(0) containing the membrane proton channel, linked together by a central stalk and a peripheral stalk. During catalysis, ATP synthesis in the catalytic domain of F(1) is coupled via a rotary mechanism of the central stalk subunits to proton translocation. Its function is as follows. Component of the F(0) channel, it forms part of the peripheral stalk, linking F(1) to F(0). The protein is ATP synthase subunit b of Mycobacterium marinum (strain ATCC BAA-535 / M).